A 390-amino-acid polypeptide reads, in one-letter code: Chalcone synthase (390 aa).

Residue C164 is part of the active site.

The protein belongs to the thiolase-like superfamily. Chalcone/stilbene synthases family.

The enzyme catalyses (E)-4-coumaroyl-CoA + 3 malonyl-CoA + 3 H(+) = 2',4,4',6'-tetrahydroxychalcone + 3 CO2 + 4 CoA. It functions in the pathway secondary metabolite biosynthesis; flavonoid biosynthesis. In terms of biological role, the primary product of this enzyme is 4,2',4',6'-tetrahydroxychalcone (also termed naringenin-chalcone or chalcone) which undergoes enzyme-catalyzed or spontaneous isomerization into naringenin. The sequence is that of Chalcone synthase from Hypericum androsaemum (Tutsan).